An 85-amino-acid chain; its full sequence is Cell division topological specificity factor (85 aa).

This sequence belongs to the MinE family.

Its function is as follows. Prevents the cell division inhibition by proteins MinC and MinD at internal division sites while permitting inhibition at polar sites. This ensures cell division at the proper site by restricting the formation of a division septum at the midpoint of the long axis of the cell. This Thioalkalivibrio sulfidiphilus (strain HL-EbGR7) protein is Cell division topological specificity factor.